Consider the following 320-residue polypeptide: ADP-L-glycero-D-manno-heptose-6-epimerase (320 aa).

Residues 10 to 11 (FI), 31 to 32 (DN), K38, K53, 75 to 79 (LGACS), and N92 each bind NADP(+). Residue Y139 is the Proton acceptor of the active site. K143 lines the NADP(+) pocket. A substrate-binding site is contributed by N168. Positions 169 and 177 each coordinate NADP(+). K177 (proton acceptor) is an active-site residue. Residues G179, H186, 200–203 (FEGS), R213, and Y277 contribute to the substrate site.

It belongs to the NAD(P)-dependent epimerase/dehydratase family. HldD subfamily. As to quaternary structure, homopentamer. Requires NADP(+) as cofactor.

It catalyses the reaction ADP-D-glycero-beta-D-manno-heptose = ADP-L-glycero-beta-D-manno-heptose. Its pathway is nucleotide-sugar biosynthesis; ADP-L-glycero-beta-D-manno-heptose biosynthesis; ADP-L-glycero-beta-D-manno-heptose from D-glycero-beta-D-manno-heptose 7-phosphate: step 4/4. In terms of biological role, catalyzes the interconversion between ADP-D-glycero-beta-D-manno-heptose and ADP-L-glycero-beta-D-manno-heptose via an epimerization at carbon 6 of the heptose. This Alkalilimnicola ehrlichii (strain ATCC BAA-1101 / DSM 17681 / MLHE-1) protein is ADP-L-glycero-D-manno-heptose-6-epimerase.